The sequence spans 424 residues: Serine--tRNA ligase 1 (424 aa).

232–234 serves as a coordination point for L-serine; it reads TAE. 263–265 provides a ligand contact to ATP; it reads RSE. Glu286 serves as a coordination point for L-serine. Position 350–353 (350–353) interacts with ATP; that stretch reads EISS. Ser386 contacts L-serine.

This sequence belongs to the class-II aminoacyl-tRNA synthetase family. Type-1 seryl-tRNA synthetase subfamily. Homodimer. The tRNA molecule binds across the dimer.

It localises to the cytoplasm. The enzyme catalyses tRNA(Ser) + L-serine + ATP = L-seryl-tRNA(Ser) + AMP + diphosphate + H(+). It carries out the reaction tRNA(Sec) + L-serine + ATP = L-seryl-tRNA(Sec) + AMP + diphosphate + H(+). Its pathway is aminoacyl-tRNA biosynthesis; selenocysteinyl-tRNA(Sec) biosynthesis; L-seryl-tRNA(Sec) from L-serine and tRNA(Sec): step 1/1. In terms of biological role, catalyzes the attachment of serine to tRNA(Ser). Is also able to aminoacylate tRNA(Sec) with serine, to form the misacylated tRNA L-seryl-tRNA(Sec), which will be further converted into selenocysteinyl-tRNA(Sec). This is Serine--tRNA ligase 1 from Clostridium acetobutylicum (strain ATCC 824 / DSM 792 / JCM 1419 / IAM 19013 / LMG 5710 / NBRC 13948 / NRRL B-527 / VKM B-1787 / 2291 / W).